The chain runs to 603 residues: NADH-ubiquinone oxidoreductase chain 5 (603 aa).

Transmembrane regions (helical) follow at residues 4-24 (YTSI…ATLV), 36-56 (VKTT…LYIF), 87-107 (MMFI…SLWY), 122-142 (LIFL…QLFI), 171-191 (AVLY…WFLL), 211-233 (LPLM…HPWL), 241-261 (TPVS…FLLI), 272-292 (LTQN…AMCA), 301-320 (IVAF…IGIN), 325-347 (AFLH…GSII), 370-390 (STSL…TGFY), 406-422 (AWAL…TSAY), 488-508 (LLAL…TLMT), and 583-603 (MIKL…LLMV).

This sequence belongs to the complex I subunit 5 family. As to quaternary structure, core subunit of respiratory chain NADH dehydrogenase (Complex I) which is composed of 45 different subunits.

The protein resides in the mitochondrion inner membrane. The enzyme catalyses a ubiquinone + NADH + 5 H(+)(in) = a ubiquinol + NAD(+) + 4 H(+)(out). Core subunit of the mitochondrial membrane respiratory chain NADH dehydrogenase (Complex I) which catalyzes electron transfer from NADH through the respiratory chain, using ubiquinone as an electron acceptor. Essential for the catalytic activity and assembly of complex I. In Papio hamadryas (Hamadryas baboon), this protein is NADH-ubiquinone oxidoreductase chain 5 (MT-ND5).